The primary structure comprises 310 residues: Inorganic pyrophosphatase, mitochondrial (310 aa).

The transit peptide at 1 to 30 directs the protein to the mitochondrion; the sequence is MNLLRMNALTSKARSIERLKQTLNILSIRN. Mg(2+) is bound by residues D152, D157, and D189.

Belongs to the PPase family. Homodimer that binds non-covalently to a protein complex in the inner mitochondrial membrane. The cofactor is Mg(2+).

The protein localises to the mitochondrion. It carries out the reaction diphosphate + H2O = 2 phosphate + H(+). Involved in energy production. Its activity is stimulated by uncouplers of ATP synthesis. The sequence is that of Inorganic pyrophosphatase, mitochondrial (PPA2) from Saccharomyces cerevisiae (strain ATCC 204508 / S288c) (Baker's yeast).